A 110-amino-acid chain; its full sequence is Large ribosomal subunit protein P1 (110 aa).

A Blocked amino end (Ala) modification is found at A2. The span at 69-83 (AAPAAGGAAAATEAP) shows a compositional bias: low complexity. A disordered region spans residues 69–110 (AAPAAGGAAAATEAPAAKEEKKEEKKEESEEEDEDMGFGLFD). Basic and acidic residues predominate over residues 84–96 (AAKEEKKEEKKEE). S97 is modified (phosphoserine; in form eL12'-P).

As to quaternary structure, part of the ribosomal stalk of the large ribosomal subunit; P1 and P2 exist as dimers which assemble on the P0 scaffold. In terms of processing, phosphorylation of Ser-97 converts eL12' to eL12'-P.

Its function is as follows. Plays an important role in the elongation step of protein synthesis. This chain is Large ribosomal subunit protein P1, found in Artemia salina (Brine shrimp).